We begin with the raw amino-acid sequence, 225 residues long: Uracil-DNA glycosylase (225 aa).

The Proton acceptor role is filled by aspartate 65.

The protein belongs to the uracil-DNA glycosylase (UDG) superfamily. UNG family.

The protein resides in the cytoplasm. The catalysed reaction is Hydrolyzes single-stranded DNA or mismatched double-stranded DNA and polynucleotides, releasing free uracil.. Its function is as follows. Excises uracil residues from the DNA which can arise as a result of misincorporation of dUMP residues by DNA polymerase or due to deamination of cytosine. This Anoxybacillus flavithermus (strain DSM 21510 / WK1) protein is Uracil-DNA glycosylase.